The sequence spans 389 residues: Phospho-N-acetylmuramoyl-pentapeptide-transferase (389 aa).

10 helical membrane passes run 25 to 45 (RAVMATITALVIGLVCGPWVI), 73 to 93 (TMGGVLILIGIAVATLLWGDL), 97 to 117 (FIWIVMLVTFGFGVIGWVDDY), 135 to 155 (FWQSVIGLFAAVYLAFSVSEA), 190 to 210 (ISYPLGVWGFIALTYFVIVGA), 222 to 242 (GLVIMPVVLVGASLGVFAYVM), 258 to 278 (GAGELLIFCSAMGGAGLAFLW), 286 to 306 (VFMGDVGALALGGALGTVAVI), 311 to 331 (IVLFIMGGIFVAETLSVMLQV), and 366 to 386 (QVVVRFWIITLMLCLFGLSTL).

Belongs to the glycosyltransferase 4 family. MraY subfamily. Mg(2+) is required as a cofactor.

The protein resides in the cell inner membrane. It catalyses the reaction UDP-N-acetyl-alpha-D-muramoyl-L-alanyl-gamma-D-glutamyl-meso-2,6-diaminopimeloyl-D-alanyl-D-alanine + di-trans,octa-cis-undecaprenyl phosphate = di-trans,octa-cis-undecaprenyl diphospho-N-acetyl-alpha-D-muramoyl-L-alanyl-D-glutamyl-meso-2,6-diaminopimeloyl-D-alanyl-D-alanine + UMP. Its pathway is cell wall biogenesis; peptidoglycan biosynthesis. In terms of biological role, catalyzes the initial step of the lipid cycle reactions in the biosynthesis of the cell wall peptidoglycan: transfers peptidoglycan precursor phospho-MurNAc-pentapeptide from UDP-MurNAc-pentapeptide onto the lipid carrier undecaprenyl phosphate, yielding undecaprenyl-pyrophosphoryl-MurNAc-pentapeptide, known as lipid I. This Burkholderia pseudomallei (strain 1106a) protein is Phospho-N-acetylmuramoyl-pentapeptide-transferase.